Consider the following 197-residue polypeptide: MSTLVPYVIEQTGNGERSYDIFSRLLKDRIIFVDGEINDMSADLVVAQLLFLEAQNPDKDISLYINSPGGSVTAGLAIYDTMQHIRPDVQTICLGQCASMGAVLLAGGAKNKRYALPSSRVMIHQPWGGVQGQAVDINIQAKEIVRLKKLTIKYFAENTGKTEKQVAADMERDFFMSAEEALTYGIIDTVMNRRKDG.

Serine 99 serves as the catalytic Nucleophile. The active site involves histidine 124.

The protein belongs to the peptidase S14 family. As to quaternary structure, fourteen ClpP subunits assemble into 2 heptameric rings which stack back to back to give a disk-like structure with a central cavity, resembling the structure of eukaryotic proteasomes.

The protein resides in the cytoplasm. It catalyses the reaction Hydrolysis of proteins to small peptides in the presence of ATP and magnesium. alpha-casein is the usual test substrate. In the absence of ATP, only oligopeptides shorter than five residues are hydrolyzed (such as succinyl-Leu-Tyr-|-NHMec, and Leu-Tyr-Leu-|-Tyr-Trp, in which cleavage of the -Tyr-|-Leu- and -Tyr-|-Trp bonds also occurs).. Its function is as follows. Cleaves peptides in various proteins in a process that requires ATP hydrolysis. Has a chymotrypsin-like activity. Plays a major role in the degradation of misfolded proteins. The chain is ATP-dependent Clp protease proteolytic subunit 1 from Treponema denticola (strain ATCC 35405 / DSM 14222 / CIP 103919 / JCM 8153 / KCTC 15104).